Consider the following 578-residue polypeptide: Alpha-(1,6)-fucosyltransferase (578 aa).

The Cytoplasmic portion of the chain corresponds to 1-9; that stretch reads MRPWTGSWR. Residues 10-30 form a helical; Signal-anchor for type II membrane protein membrane-spanning segment; that stretch reads WIMLILFAWGTLLFYIGGHLV. Topologically, residues 31 to 578 are lumenal; sequence RDNENPDHSS…KYPTYQEAEK (548 aa). 3 cysteine pairs are disulfide-bonded: Cys-207/Cys-269, Cys-215/Cys-233, and Cys-221/Cys-225. The GT23 domain maps to 209–496; that stretch reads KAKKLVCNIN…PDASAHFHSL (288 aa). An SH3-binding motif is present at residues 302–308; it reads PRPPYLP. The interval 368 to 369 is important for donor substrate binding; that stretch reads RR. Cys-468 and Cys-475 form a disulfide bridge. The 62-residue stretch at 505-566 folds into the SH3 domain; the sequence is QNAHNQLAIY…PSYKVKEKIE (62 aa).

Belongs to the glycosyltransferase 23 family.

It localises to the golgi apparatus. The protein localises to the golgi stack membrane. The catalysed reaction is N(4)-{beta-D-GlcNAc-(1-&gt;2)-alpha-D-Man-(1-&gt;3)-[beta-D-GlcNAc-(1-&gt;2)-alpha-D-Man-(1-&gt;6)]-beta-D-Man-(1-&gt;4)-beta-D-GlcNAc-(1-&gt;4)-beta-D-GlcNAc}-L-asparaginyl-[protein] + GDP-beta-L-fucose = an N(4)-{beta-D-GlcNAc-(1-&gt;2)-alpha-D-Man-(1-&gt;3)-[beta-D-GlcNAc-(1-&gt;2)-alpha-D-Man-(1-&gt;6)]-beta-D-Man-(1-&gt;4)-beta-D-GlcNAc-(1-&gt;4)-[alpha-L-Fuc-(1-&gt;6)]-beta-D-GlcNAc}-L-asparaginyl-[protein] + GDP + H(+). Its pathway is protein modification; protein glycosylation. Its function is as follows. Catalyzes the addition of fucose in alpha 1-6 linkage to the first GlcNAc residue, next to the peptide chains in N-glycans. The polypeptide is Alpha-(1,6)-fucosyltransferase (fut8) (Xenopus tropicalis (Western clawed frog)).